Reading from the N-terminus, the 354-residue chain is Probable dual-specificity RNA methyltransferase RlmN (354 aa).

Glu-94 (proton acceptor) is an active-site residue. The 230-residue stretch at 103–332 (GRRRNTACLS…QEAGLEAAIR (230 aa)) folds into the Radical SAM core domain. Cys-110 and Cys-343 are joined by a disulfide. Residues Cys-117, Cys-121, and Cys-124 each contribute to the [4Fe-4S] cluster site. Residues 169-170 (GE), Ser-201, 224-226 (SLH), and Asn-300 each bind S-adenosyl-L-methionine. Catalysis depends on Cys-343, which acts as the S-methylcysteine intermediate.

Belongs to the radical SAM superfamily. RlmN family. [4Fe-4S] cluster serves as cofactor.

The protein resides in the cytoplasm. It catalyses the reaction adenosine(2503) in 23S rRNA + 2 reduced [2Fe-2S]-[ferredoxin] + 2 S-adenosyl-L-methionine = 2-methyladenosine(2503) in 23S rRNA + 5'-deoxyadenosine + L-methionine + 2 oxidized [2Fe-2S]-[ferredoxin] + S-adenosyl-L-homocysteine. The catalysed reaction is adenosine(37) in tRNA + 2 reduced [2Fe-2S]-[ferredoxin] + 2 S-adenosyl-L-methionine = 2-methyladenosine(37) in tRNA + 5'-deoxyadenosine + L-methionine + 2 oxidized [2Fe-2S]-[ferredoxin] + S-adenosyl-L-homocysteine. In terms of biological role, specifically methylates position 2 of adenine 2503 in 23S rRNA and position 2 of adenine 37 in tRNAs. This Moorella thermoacetica (strain ATCC 39073 / JCM 9320) protein is Probable dual-specificity RNA methyltransferase RlmN.